We begin with the raw amino-acid sequence, 1213 residues long: Formin (1213 aa).

Disordered stretches follow at residues 1–24 (MEGGNAGCSRQLPERAGPAESEPD), 66–111 (QANN…EPEP), 144–169 (VHTTSDTESDGESKDPDADETGTSKC), 183–216 (GNNQSKEESDSEGYGHSDDTVGRDDTELHPPISQ), and 357–489 (DVSK…PKAN). 2 stretches are compositionally biased toward basic and acidic residues: residues 187-210 (SKEESDSEGYGHSDDTVGRDDTEL) and 431-464 (EAIKRKMRNEKESLKAVFERSKSKPGDGPSDKSP). 2 coiled-coil regions span residues 428–450 (SELEAIKRKMRNEKESLKAVFER) and 503–572 (EYQA…IGVS). The tract at residues 624–774 (ISTQGENKDS…PRKPAIEPSR (151 aa)) is disordered. Positions 636–647 (VPSSESVLSCQP) are enriched in polar residues. Composition is skewed to pro residues over residues 650 to 672 (MLPPSPPPPPPPPPPPPPPPPPF), 680 to 689 (LVPPPPPLPT), and 718 to 751 (PAPPAPPPLPGLGPPVPPPLPGSGLPPPPPPPGP). In terms of domain architecture, FH1 spans 652-751 (PPSPPPPPPP…LPPPPPPPGP (100 aa)). The span at 755-764 (FNSTLSSSQG) shows a compositional bias: polar residues. Positions 766–1182 (RKPAIEPSRP…KVAQQSVSKL (417 aa)) constitute an FH2 domain. Positions 1050-1125 (FQASQVKFED…ENAQKCFEET (76 aa)) form a coiled coil. The disordered stretch occupies residues 1193–1213 (INPTASLKERLRQKEANVNAN).

The protein belongs to the formin homology family. Cappuccino subfamily. Present in the adult brain, kidney, brain, heart and intestine and throughout the embryo.

The protein localises to the nucleus. Functionally, is important for morphogenesis of limb and kidney and may be involved in determining dorsoventral neural tube polarity and motor neuron induction. It may also have a function in differentiated cells or be involved in maintaining specific differentiated states. The protein is Formin (LD) of Gallus gallus (Chicken).